Consider the following 73-residue polypeptide: Translation initiation factor IF-1 (73 aa).

The S1-like domain maps to 1–73; sequence MDIKEEAIET…TKGRIVYREK (73 aa).

This sequence belongs to the IF-1 family. In terms of assembly, component of the 30S ribosomal translation pre-initiation complex which assembles on the 30S ribosome in the order IF-2 and IF-3, IF-1 and N-formylmethionyl-tRNA(fMet); mRNA recruitment can occur at any time during PIC assembly.

The protein localises to the cytoplasm. Functionally, one of the essential components for the initiation of protein synthesis. Stabilizes the binding of IF-2 and IF-3 on the 30S subunit to which N-formylmethionyl-tRNA(fMet) subsequently binds. Helps modulate mRNA selection, yielding the 30S pre-initiation complex (PIC). Upon addition of the 50S ribosomal subunit IF-1, IF-2 and IF-3 are released leaving the mature 70S translation initiation complex. The sequence is that of Translation initiation factor IF-1 from Borreliella afzelii (strain PKo) (Borrelia afzelii).